Reading from the N-terminus, the 167-residue chain is Ureidoglycolate lyase (167 aa).

Belongs to the ureidoglycolate lyase family. In terms of assembly, homodimer. Ni(2+) is required as a cofactor.

The catalysed reaction is (S)-ureidoglycolate = urea + glyoxylate. Its pathway is nitrogen metabolism; (S)-allantoin degradation. In terms of biological role, catalyzes the catabolism of the allantoin degradation intermediate (S)-ureidoglycolate, generating urea and glyoxylate. Involved in the utilization of allantoin as nitrogen source. The chain is Ureidoglycolate lyase from Pseudomonas fluorescens (strain Pf0-1).